Here is a 317-residue protein sequence, read N- to C-terminus: MPVFKAPFNGYSVKFSPFYESRLAVATAQNFGILGNGRIHVLELAPGAPGVTESVSYDTADAVYDVCWSESHDSVLIAAIGDGSVKIYDTALPPPSNPIRSFQEHAREVQSVDYNPTRRDSFLTSSWDDTVKLWAMDRPASVRTFKEHAYCVYQAVWNPKHGDVFASASGDCTLRIWDVREPGSTMIIPAHDFEILSCDWNKYDDCILATSSVDKTVKVWDVRSYRVPLAVLNGHGYAVRKVKFSPHRRSLIASCSYDMSVCLWDYMVEDALVGRYDHHTEFAVGIDMSVLVEGLMASTGWDELVYVWQQGMDPRAS.

WD repeat units follow at residues 58 to 98 (DTAD…PSNP), 104 to 144 (EHAR…SVRT), 147 to 187 (EHAY…STMI), 190 to 230 (AHDF…VPLA), 234 to 274 (GHGY…ALVG), and 278 to 317 (HHTEFAVGIDMSVLVEGLMASTGWDELVYVWQQGMDPRAS).

This sequence belongs to the WD repeat peroxin-7 family. Interacts with PEX5; interaction only takes place when PEX7 is associated with cargo proteins. Interacts with PEX13 (via N-terminus) and PEX12 (via C-terminus), but not with PEX14. In terms of tissue distribution, expressed in siliques and leaves, but barely detectable in flowers, stems and roots.

The protein localises to the cytoplasm. Its subcellular location is the cytosol. It localises to the peroxisome matrix. Receptor required for the peroxisomal import of proteins containing a C-terminal PTS2-type peroxisomal targeting signal. Specifically binds to cargo proteins containing a PTS2 peroxisomal targeting signal in the cytosol. Cargo protein-binding triggers interaction with PEX5 and formation of a ternary complex composed of PEX5 and PEX7 along with PTS2-containing cargo proteins, which is tranlocated into peroxisomes by passing through the PEX13-PEX14 docking complex. The chain is Peroxisome biogenesis protein 7 (PEX7) from Arabidopsis thaliana (Mouse-ear cress).